Here is a 317-residue protein sequence, read N- to C-terminus: MKNNGGARVVVIGAGFVGASYVFALMNQGIADEIVLIDANESKAIGDAMDFNHGKVFAPKPVDIWHGDYDDCRDADLVVICAGANQKPGETRLDLVDKNIAIFRSIVESVMASGFQGLFLVATNPVDILTYATWKFSGLPHERVIGSGTILDTARFRFLLGEYFSVAPQNVHAYIIGEHGDTELPVWSQAYIGVMPIRKLVESKGEEAQKDLERIFVNVRDAAYQIIEKKGATYYGIAMGLARVTRAILHNENAILTVSAYLDGLYGERDVYIGVPAVINRNGIREVIEIELNDDEKNRFHHSAATLKSVLARAFTR.

Residues 16–17 (FV), Asp-38, Lys-43, Tyr-69, and 83–84 (GA) each bind NAD(+). 2 residues coordinate substrate: Gln-86 and Arg-92. NAD(+) contacts are provided by residues Ser-105, 122-124 (ATN), and Ser-147. Residue 124 to 127 (NPVD) coordinates substrate. 152–155 (DTAR) contributes to the substrate binding site. Beta-D-fructose 1,6-bisphosphate is bound by residues Arg-157 and 169–172 (QNVH). Catalysis depends on His-179, which acts as the Proton acceptor. Tyr-224 carries the post-translational modification Phosphotyrosine. Thr-233 is a binding site for substrate.

It belongs to the LDH/MDH superfamily. LDH family. Exists as a dimer and a tetramer (dimer of dimers). The conversion occurs via the binding of fructose 1,6-bisphosphate (FBP) to the dimer.

Its subcellular location is the cytoplasm. The catalysed reaction is (S)-lactate + NAD(+) = pyruvate + NADH + H(+). Its pathway is fermentation; pyruvate fermentation to lactate; (S)-lactate from pyruvate: step 1/1. Its activity is regulated as follows. Allosterically activated by fructose 1,6-bisphosphate (FBP). The improvement in affinity for substrate occurs in two steps; the binding of fructose 1,6-bisphosphate (FBP) to the dimer, and the dimer to tetramer conversion. In terms of biological role, catalyzes the conversion of lactate to pyruvate. This Geobacillus stearothermophilus (Bacillus stearothermophilus) protein is L-lactate dehydrogenase.